Here is a 550-residue protein sequence, read N- to C-terminus: Zinc finger protein 426 (550 aa).

Residues 39–110 (VSFEDVIVDF…KIVFPEWKLQ (72 aa)) enclose the KRAB domain. 11 consecutive C2H2-type zinc fingers follow at residues 219–241 (FECS…QRTH), 274–296 (HRCK…MRTH), 302–324 (YECK…GRTH), 330–352 (YVCS…VRSH), 358–380 (YGCK…IRTH), 386–408 (FVCV…LKLH), 414–436 (CECK…MRTH), 442–464 (YTCK…MRIH), 470–492 (YECK…ERTH), 498–522 (YECK…SHTH), and 528–550 (YKCQ…ERIH).

The protein localises to the nucleus. In terms of biological role, may be involved in transcriptional regulation. This Mus musculus (Mouse) protein is Zinc finger protein 426 (Znf426).